Here is a 677-residue protein sequence, read N- to C-terminus: MRLQVQIGTECVVVPCKPDDTIHAVAKKSVEKLRRLRPKLPLADDYFEVRRTVGNSLLDPEDLVSDVLKDSDFIIVAASVEETEDAKEAKKQEEIDNARAEIEKIDNRRRKVSFADSLAPMVLAPPTKLLILDGNSLLPEDLVRCEKGECAIQLSMESEDRIRKARTFLEKIASEHRAVYGVTTGFGTFSNVTIPPEKLKKLQLNLIRSHATGYGEPLAPNRARMLLALRINILAKGHSGISVENIKKMIAAFNAFCVSYVPQQGTVGCSGDLCPLAHLALGLLGEGKMWSPTTGWQPADVVLKKNNLEPLELGPKEGLALINGTQMVTALGAYTLERAHNIARQADVIAALSLDVLKGTTRAYDPDIHRIRPHRGQNLSALRLRALLHSEANPSQIAESHRNCTKVQDAYTLRCVPQVHGVVHDTIEFVREIITTEMNSATDNPLVFADREEIISGGNFHGEYPAKALDFLAIAVAELAQMSERRLERLVNKELSGLPTFLTPDGGLNSGFMTVQLCAASLVSENKVLCHPSSVDSIPTSCNQEDHVSMGGFAARKALTVVEHVEAVLAMELLAACQGIEFLKPLISTAPLHKIYQLVRSVAPPLNEDRYMKPEIDAVLEMIRENRIWEAVLPHLETLEAMEELDPDALRQFTKTPTGIVQDRSMIPISDDEESIE.

A cross-link (5-imidazolinone (Cys-Gly)) is located at residues 269-271 (CSG). At serine 270 the chain carries 2,3-didehydroalanine (Ser).

This sequence belongs to the PAL/histidase family. In terms of processing, contains an active site 4-methylidene-imidazol-5-one (MIO), which is formed autocatalytically by cyclization and dehydration of residues Cys-Ser-Gly.

The catalysed reaction is L-histidine = trans-urocanate + NH4(+). It participates in amino-acid degradation; L-histidine degradation into L-glutamate; N-formimidoyl-L-glutamate from L-histidine: step 1/3. The protein is Histidine ammonia-lyase of Caenorhabditis elegans.